A 372-amino-acid polypeptide reads, in one-letter code: Flagellar P-ring protein (372 aa).

A signal peptide spans 1-29; it reads MPARPIPVPAFALALALAAALAVPAPAAA.

The protein belongs to the FlgI family. In terms of assembly, the basal body constitutes a major portion of the flagellar organelle and consists of four rings (L,P,S, and M) mounted on a central rod.

It is found in the periplasm. Its subcellular location is the bacterial flagellum basal body. Assembles around the rod to form the L-ring and probably protects the motor/basal body from shearing forces during rotation. This is Flagellar P-ring protein from Anaeromyxobacter dehalogenans (strain 2CP-1 / ATCC BAA-258).